We begin with the raw amino-acid sequence, 206 residues long: Outer-membrane lipoprotein carrier protein (206 aa).

Residues 1–20 (MFYLIKKLPKFILFSLYLYA) form the signal peptide.

The protein belongs to the LolA family. In terms of assembly, monomer.

It is found in the periplasm. Functionally, participates in the translocation of lipoproteins from the inner membrane to the outer membrane. Only forms a complex with a lipoprotein if the residue after the N-terminal Cys is not an aspartate (The Asp acts as a targeting signal to indicate that the lipoprotein should stay in the inner membrane). This Wigglesworthia glossinidia brevipalpis protein is Outer-membrane lipoprotein carrier protein.